The primary structure comprises 270 residues: Hemin import ATP-binding protein HmuV (270 aa).

Residues 2-238 (LTVENIEVTL…VTLSQAYGCT (237 aa)) enclose the ABC transporter domain. Residue 34–41 (GHNGSGKT) coordinates ATP.

Belongs to the ABC transporter superfamily. Heme (hemin) importer (TC 3.A.1.14.5) family. The complex is composed of two ATP-binding proteins (HmuV), two transmembrane proteins (HmuU) and a solute-binding protein (HmuT).

The protein resides in the cell inner membrane. In terms of biological role, part of the ABC transporter complex HmuTUV involved in hemin import. Responsible for energy coupling to the transport system. The chain is Hemin import ATP-binding protein HmuV from Jannaschia sp. (strain CCS1).